We begin with the raw amino-acid sequence, 165 residues long: Myosin regulatory light chain 2, ventricular/cardiac muscle isoform (165 aa).

Serine 2 is subject to N,N,N-trimethylserine. Deamidated asparagine is present on asparagine 14. Serine 15 and serine 19 each carry phosphoserine. EF-hand domains are found at residues threonine 24–valine 59, aspartate 94–arginine 129, and phenylalanine 130–lysine 165. Residues aspartate 37, asparagine 39, aspartate 41, and aspartate 48 each contribute to the Ca(2+) site. Threonine 52 carries the phosphothreonine modification.

In terms of assembly, myosin is a hexamer of 2 heavy chains and 4 light chains. Interacts with MYOC. Post-translationally, N-terminus is methylated by METTL11A/NTM1. In terms of processing, phosphorylated by MYLK3 and MYLK2; promotes cardiac muscle contraction and function. Dephosphorylated by PPP1CB complexed to PPP1R12B. The phosphorylated form in adult is expressed as gradients across the heart from endocardium (low phosphorylation) to epicardium (high phosphorylation); regulates cardiac torsion and workload distribution.

It localises to the cytoplasm. Its subcellular location is the myofibril. The protein localises to the sarcomere. The protein resides in the a band. In terms of biological role, contractile protein that plays a role in heart development and function. Following phosphorylation, plays a role in cross-bridge cycling kinetics and cardiac muscle contraction by increasing myosin lever arm stiffness and promoting myosin head diffusion; as a consequence of the increase in maximum contraction force and calcium sensitivity of contraction force. These events altogether slow down myosin kinetics and prolong duty cycle resulting in accumulated myosins being cooperatively recruited to actin binding sites to sustain thin filament activation as a means to fine-tune myofilament calcium sensitivity to force. During cardiogenesis plays an early role in cardiac contractility by promoting cardiac myofibril assembly. This is Myosin regulatory light chain 2, ventricular/cardiac muscle isoform from Oryctolagus cuniculus (Rabbit).